Here is a 293-residue protein sequence, read N- to C-terminus: Protein boule-like (293 aa).

Over residues 1-16 (METESRAQSTNQTQTD) the composition is skewed to polar residues. Positions 1–39 (METESRAQSTNQTQTDSLSPSPNPVSPVPLNNPTSGPRY) are disordered. Residues Ser19, Ser21, and Ser26 each carry the phosphoserine modification. Positions 45–122 (NRIFVGGIDF…KKLNIGPAIR (78 aa)) constitute an RRM domain. Positions 172–196 (PSRSISSSPVMVAQPVYQQPAYHYQ) constitute a DAZ domain.

This sequence belongs to the RRM DAZ family. Interacts with DAZ1 and DAZL. Testis specific. Not expressed in early embryos, primoridal germ cells and spermatogonial cells. First expressed in the cytoplasm of spermatocytes and then persists through meiosis.

It is found in the cytoplasm. Functionally, probable RNA-binding protein, which may be required during spermatogenesis. May act by binding to the 3'-UTR of mRNAs and regulating their translation. This chain is Protein boule-like, found in Mus musculus (Mouse).